The following is a 181-amino-acid chain: MSRIGNKPVAIPSGVTVSIADRNIDVEGPKGKLSFKHRPEVKVAVDSDTNQVIVSRDGDDRPSREFHGLTRAIVANMLVGVKDGYEKKLEIVGVGYLASISGDTLQLRVGYANELHRKIPTDLTVTCPDQTHVVIQGCDKQSVGQFAAEIRSLRKPEPYKGKGIRYQGEQVKIKPGKSATK.

Belongs to the universal ribosomal protein uL6 family. Part of the 50S ribosomal subunit.

In terms of biological role, this protein binds to the 23S rRNA, and is important in its secondary structure. It is located near the subunit interface in the base of the L7/L12 stalk, and near the tRNA binding site of the peptidyltransferase center. This is Large ribosomal subunit protein uL6 from Rhodopirellula baltica (strain DSM 10527 / NCIMB 13988 / SH1).